The following is a 127-amino-acid chain: MPLIGKGNQAVGDLGEQTAADYLVKQGYRILERNFRSRGGEVDIVAKDRQGCIAFVEVKTRRSLAYGLPQLAVTQRKQHQISKGALAWISKNRLHECTARFDVIAVLLQDGSEPTIEHIPNAFDLAY.

Belongs to the UPF0102 family.

The polypeptide is UPF0102 protein Glov_2230 (Trichlorobacter lovleyi (strain ATCC BAA-1151 / DSM 17278 / SZ) (Geobacter lovleyi)).